Here is a 205-residue protein sequence, read N- to C-terminus: Mediator of RNA polymerase II transcription subunit 29 (205 aa).

Over residues 1-27 (MNPNMNMMQMSGPPMMQVSPMMQSSPQ) the composition is skewed to low complexity. The segment at 1 to 65 (MNPNMNMMQM…QQQQQQAEKL (65 aa)) is disordered. A compositionally biased stretch (pro residues) spans 28 to 38 (PMMPTGPPGPV). The segment covering 39–61 (PMQQQHQQQQQQQQQQQQQQQQQ) has biased composition (low complexity).

Belongs to the Mediator complex subunit 29 family. In terms of assembly, component of the Mediator complex.

It is found in the nucleus. Component of the Mediator complex, a coactivator involved in the regulated transcription of nearly all RNA polymerase II-dependent genes. Mediator functions as a bridge to convey information from gene-specific regulatory proteins to the basal RNA polymerase II transcription machinery. Mediator is recruited to promoters by direct interactions with regulatory proteins and serves as a scaffold for the assembly of a functional preinitiation complex with RNA polymerase II and the general transcription factors. The sequence is that of Mediator of RNA polymerase II transcription subunit 29 (ix) from Drosophila virilis (Fruit fly).